A 307-amino-acid polypeptide reads, in one-letter code: Fructokinase (307 aa).

This sequence belongs to the carbohydrate kinase PfkB family.

The enzyme catalyses D-fructose + ATP = D-fructose 6-phosphate + ADP + H(+). The polypeptide is Fructokinase (cscK) (Escherichia coli).